A 292-amino-acid chain; its full sequence is D-alanyl-D-alanine endopeptidase (292 aa).

Positions 1–18 (MFKKALFILSLCPSFALA) are cleaved as a signal peptide. The active-site Acyl-ester intermediate is the Ser45. The active-site Proton acceptor is the Lys48. The active site involves Ser102. Lys207 is a substrate binding site.

The protein belongs to the peptidase S11 family.

It localises to the periplasm. Its function is as follows. Cell wall formation. May play a specialized role in remodeling the cell wall. Specifically hydrolyzes the DD-diaminopimelate-alanine bonds in high-molecular-mass murein sacculi. The chain is D-alanyl-D-alanine endopeptidase (pbpG) from Haemophilus influenzae (strain ATCC 51907 / DSM 11121 / KW20 / Rd).